The following is a 217-amino-acid chain: 7-cyano-7-deazaguanine synthase (217 aa).

10–20 (FSGGQDSTTCL) serves as a coordination point for ATP. Zn(2+) is bound by residues Cys185, Cys194, Cys197, and Cys200.

It belongs to the QueC family. As to quaternary structure, homodimer. Zn(2+) is required as a cofactor.

The enzyme catalyses 7-carboxy-7-deazaguanine + NH4(+) + ATP = 7-cyano-7-deazaguanine + ADP + phosphate + H2O + H(+). The protein operates within purine metabolism; 7-cyano-7-deazaguanine biosynthesis. Functionally, catalyzes the ATP-dependent conversion of 7-carboxy-7-deazaguanine (CDG) to 7-cyano-7-deazaguanine (preQ(0)). This Streptococcus thermophilus (strain CNRZ 1066) protein is 7-cyano-7-deazaguanine synthase.